Reading from the N-terminus, the 468-residue chain is 6-phospho-beta-galactosidase (468 aa).

D-galactose 6-phosphate contacts are provided by Gln-19, His-116, Asn-159, Glu-160, and Asn-297. Residue Glu-160 is the Proton donor of the active site. Glu-375 functions as the Nucleophile in the catalytic mechanism. Ser-428, Trp-429, Lys-435, and Tyr-437 together coordinate D-galactose 6-phosphate.

The protein belongs to the glycosyl hydrolase 1 family.

The catalysed reaction is a 6-phospho-beta-D-galactoside + H2O = D-galactose 6-phosphate + an alcohol. The protein operates within carbohydrate metabolism; lactose degradation; D-galactose 6-phosphate and beta-D-glucose from lactose 6-phosphate: step 1/1. In Streptococcus pyogenes serotype M18 (strain MGAS8232), this protein is 6-phospho-beta-galactosidase.